Consider the following 870-residue polypeptide: Glycerol-3-phosphate acyltransferase (870 aa).

A disordered region spans residues 1-27 (MPKKNSPLLPKETTPTQSSVDTSGSSN). The segment covering 13 to 27 (TTPTQSSVDTSGSSN) has biased composition (polar residues). An HXXXXD motif motif is present at residues 351 to 356 (HRSHID).

Belongs to the GPAT/DAPAT family.

It is found in the cell inner membrane. The catalysed reaction is sn-glycerol 3-phosphate + an acyl-CoA = a 1-acyl-sn-glycero-3-phosphate + CoA. It functions in the pathway phospholipid metabolism; CDP-diacylglycerol biosynthesis; CDP-diacylglycerol from sn-glycerol 3-phosphate: step 1/3. This Xylella fastidiosa (strain 9a5c) protein is Glycerol-3-phosphate acyltransferase (plsB).